The primary structure comprises 187 residues: Large ribosomal subunit protein uL5 (187 aa).

The protein belongs to the universal ribosomal protein uL5 family. In terms of assembly, part of the 50S ribosomal subunit; part of the 5S rRNA/L5/L18/L25 subcomplex. Contacts the 5S rRNA and the P site tRNA. Forms a bridge to the 30S subunit in the 70S ribosome.

Functionally, this is one of the proteins that bind and probably mediate the attachment of the 5S RNA into the large ribosomal subunit, where it forms part of the central protuberance. In the 70S ribosome it contacts protein S13 of the 30S subunit (bridge B1b), connecting the 2 subunits; this bridge is implicated in subunit movement. Contacts the P site tRNA; the 5S rRNA and some of its associated proteins might help stabilize positioning of ribosome-bound tRNAs. The polypeptide is Large ribosomal subunit protein uL5 (Saccharopolyspora erythraea (strain ATCC 11635 / DSM 40517 / JCM 4748 / NBRC 13426 / NCIMB 8594 / NRRL 2338)).